A 945-amino-acid polypeptide reads, in one-letter code: MRARSGVRSALLLALLLCWDPTPSLAGVDSAGQVLPDSYPSAPAEQLPYFLLEPQDAYIVKNKPVELHCRAFPATQIYFKCNGEWVSQNDHVTQESLDEATGLRVREVQIEVSRQQVEELFGLEDYWCQCVAWSSSGTTKSRRAYIRIAYLRKNFDQEPLAKEVPLDHEVLLQCRPPEGVPVAEVEWLKNEDVIDPAQDTNFLLTIDHNLIIRQARLSDTANYTCVAKNIVAKRRSTTATVIVYVNGGWSSWAEWSPCSNRCGRGWQKRTRTCTNPAPLNGGAFCEGQAFQKTACTTVCPVDGAWTEWSKWSACSTECAHWRSRECMAPPPQNGGRDCSGTLLDSKNCTDGLCVLNQRTLNDPKSHPLETSGDVALYAGLVVAVFVVVAVLMAVGVIVYRRNCRDFDTDITDSSAALTGGFHPVNFKTARPNNPQLLHPSAPPDLTASAGIYRGPVYALQDSADKIPMTNSPLLDPLPSLKIKVYNSSTIGSGSGLADGADLLGVLPPGTYPGDFSRDTHFLHLRSASLGSQHLLGLPRDPSSSVSGTFGCLGGRLSLPGTGVSLLVPNGAIPQGKFYDLYLHINKAESTLPLSEGSQTVLSPSVTCGPTGLLLCRPVVLTVPHCAEVIAGDWIFQLKTQAHQGHWEEVVTLDEETLNTPCYCQLEAKSCHILLDQLGTYVFMGESYSRSAVKRLQLAIFAPALCTSLEYSLRVYCLEDTPVALKEVLELERTLGGYLVEEPKPLLFKDSYHNLRLSLHDIPHAHWRSKLLAKYQEIPFYHVWNGSQRALHCTFTLERHSLASTEFTCKVCVRQVEGEGQIFQLHTTLAETPAGSLDALCSAPGNAITTQLGPYAFKIPLSIRQKICSSLDAPNSRGNDWRLLAQKLSMDRYLNYFATKASPTGVILDLWEARQQDDGDLNSLASALEEMGKSEMLVAMATDGDC.

The signal sequence occupies residues 1-26 (MRARSGVRSALLLALLLCWDPTPSLA). At 27 to 377 (GVDSAGQVLP…LETSGDVALY (351 aa)) the chain is on the extracellular side. The 98-residue stretch at 48–145 (PYFLLEPQDA…SGTTKSRRAY (98 aa)) folds into the Ig-like domain. Disulfide bonds link Cys69–Cys130, Cys81–Cys128, Cys174–Cys225, Cys258–Cys295, Cys262–Cys299, Cys273–Cys285, Cys314–Cys348, Cys318–Cys353, and Cys326–Cys338. One can recognise an Ig-like C2-type domain in the interval 153 to 242 (KNFDQEPLAK…KRRSTTATVI (90 aa)). The N-linked (GlcNAc...) asparagine glycan is linked to Asn222. 2 TSP type-1 domains span residues 246-300 (NGGW…TVCP) and 302-354 (DGAW…GLCV). A glycan (N-linked (GlcNAc...) asparagine) is linked at Asn347. The helical transmembrane segment at 378 to 398 (AGLVVAVFVVVAVLMAVGVIV) threads the bilayer. Over 399–945 (YRRNCRDFDT…LVAMATDGDC (547 aa)) the chain is Cytoplasmic. The S-palmitoyl cysteine moiety is linked to residue Cys403. One can recognise a ZU5 domain in the interval 543 to 686 (SSVSGTFGCL…LGTYVFMGES (144 aa)). Position 581 is a phosphotyrosine (Tyr581). The interval 689 to 838 (RSAVKRLQLA…AETPAGSLDA (150 aa)) is UPA domain. Positions 707–725 (SLEYSLRVYCLEDTPVALK) are interaction with DCC. Positions 865-943 (KICSSLDAPN…EMLVAMATDG (79 aa)) constitute a Death domain.

The protein belongs to the unc-5 family. In terms of assembly, interacts with the cytoplasmic part of DCC. Interacts with GNAI2 via its cytoplasmic part. Interacts (via death domain) with DAPK1 (via death domain). Interacts (via extracellular domain) with FLRT2 and FLRT3 (via extracellular domain), but has higher affinity for FLRT3. Identified in a complex with FLRT3 and ADGRL3; does not interact with ADGRL3 by itself. Phosphorylated on cytoplasmic tyrosine residues. In terms of processing, palmitoylation is required for pro-apoptotic activity, but not for location at lipid rafts. Post-translationally, proteolytically cleaved by caspases during apoptosis. The cleavage does not take place when the receptor is associated with netrin ligand. Its cleavage by caspases is required to induce apoptosis. Highly expressed in brain. Expressed in lung during late development. Expressed during early blood vessel formation, in the semicircular canal and in a dorsal to ventral gradient in the retina.

The protein localises to the cell membrane. It localises to the membrane raft. In terms of biological role, receptor for netrin required for axon guidance. Mediates axon repulsion of neuronal growth cones in the developing nervous system upon ligand binding. Axon repulsion in growth cones may be caused by its association with DCC that may trigger signaling for repulsion. Functions as a netrin receptor that negatively regulates vascular branching during angiogenesis. Mediates retraction of tip cell filopodia on endothelial growth cones in response to netrin. It also acts as a dependence receptor required for apoptosis induction when not associated with netrin ligand. Mediates apoptosis by activating DAPK1. In the absence of NTN1, activates DAPK1 by reducing its autoinhibitory phosphorylation at Ser-308 thereby increasing its catalytic activity. This is Netrin receptor UNC5B (Unc5b) from Mus musculus (Mouse).